Reading from the N-terminus, the 326-residue chain is MSNISVIGTGSYVPNNIITNDFLSTIVDTSDEWIRTRTGILERRISKGENTIYMATESAKEAIKNANIEANDLDLIIVATLTPDNFMPSTACSVQKEIGAINALCFDISAACSGFIYGLEIACSMLKNSFRNKALIIGAENLSKIVDWEDRNTCVLFGDGAGAAILSKTKEEGILEFHSRSNGLKGEHLTCGALEANNIFNKDDMLKNNKFIKMNGKEIFRFAVGAMSETIYSIQEKTKWDLSEVKYIISHQANSRIIEYTAKKLNTNKDKFYMNLDKYGNTSAASIPIALDEMNKKGLLNKQDKIILVGFGGGLTFGGVAILWSI.

Catalysis depends on residues Cys112 and His251. The interval 252–256 is ACP-binding; the sequence is QANSR. Asn281 is a catalytic residue.

It belongs to the thiolase-like superfamily. FabH family. In terms of assembly, homodimer.

It localises to the cytoplasm. The enzyme catalyses malonyl-[ACP] + acetyl-CoA + H(+) = 3-oxobutanoyl-[ACP] + CO2 + CoA. The protein operates within lipid metabolism; fatty acid biosynthesis. In terms of biological role, catalyzes the condensation reaction of fatty acid synthesis by the addition to an acyl acceptor of two carbons from malonyl-ACP. Catalyzes the first condensation reaction which initiates fatty acid synthesis and may therefore play a role in governing the total rate of fatty acid production. Possesses both acetoacetyl-ACP synthase and acetyl transacylase activities. Its substrate specificity determines the biosynthesis of branched-chain and/or straight-chain of fatty acids. This is Beta-ketoacyl-[acyl-carrier-protein] synthase III from Clostridium botulinum (strain Okra / Type B1).